A 320-amino-acid chain; its full sequence is MARNKIALIGSGMIGGTLAHLAGLKELGDVVLFDIAEGTPQGKGLDIAESSPVDGFDAKFTGANDYAAIEGADVVIVTAGVPRKPGMSRDDLLGINLKVMEQVGAGIKKYAPEAFVICITNPLDAMVWALQKFSGLPAHKVVGMAGVLDSARFRYFLSEEFNVSVEDVTVFVLGGHGDSMVPLARYSTVAGIPLPDLVKMGWTSQDKLDKIIQRTRDGGAEIVGLLKTGSAFYAPAASAIQMAESYLKDKKRVLPVAAQLSGQYGVKDMYVGVPTVIGANGVERIIEIDLDKDEKAQFDKSVASVAGLCEACIGIAPSLK.

Residues 10 to 15 (GSGMIG) and D34 contribute to the NAD(+) site. R83 and R89 together coordinate substrate. Residues N96 and 119 to 121 (ITN) each bind NAD(+). The substrate site is built by N121 and R152. Catalysis depends on H176, which acts as the Proton acceptor.

It belongs to the LDH/MDH superfamily. MDH type 3 family.

It carries out the reaction (S)-malate + NAD(+) = oxaloacetate + NADH + H(+). Its function is as follows. Catalyzes the reversible oxidation of malate to oxaloacetate. This Brucella abortus (strain S19) protein is Malate dehydrogenase.